The chain runs to 535 residues: Phosphoenolpyruvate carboxykinase (ATP) (535 aa).

3 residues coordinate substrate: Arg-59, Tyr-201, and Lys-207. ATP-binding positions include Lys-207, His-226, and 243-251 (GLSGTGKTT). Mn(2+)-binding residues include Lys-207 and His-226. Asp-264 provides a ligand contact to Mn(2+). ATP is bound by residues Glu-292, Arg-328, 444–445 (RI), and Thr-450. A substrate-binding site is contributed by Arg-328.

This sequence belongs to the phosphoenolpyruvate carboxykinase (ATP) family. Requires Mn(2+) as cofactor.

Its subcellular location is the cytoplasm. The enzyme catalyses oxaloacetate + ATP = phosphoenolpyruvate + ADP + CO2. The protein operates within carbohydrate biosynthesis; gluconeogenesis. In terms of biological role, involved in the gluconeogenesis. Catalyzes the conversion of oxaloacetate (OAA) to phosphoenolpyruvate (PEP) through direct phosphoryl transfer between the nucleoside triphosphate and OAA. The chain is Phosphoenolpyruvate carboxykinase (ATP) from Bacteroides fragilis (strain ATCC 25285 / DSM 2151 / CCUG 4856 / JCM 11019 / LMG 10263 / NCTC 9343 / Onslow / VPI 2553 / EN-2).